Reading from the N-terminus, the 277-residue chain is Small ribosomal subunit protein uS3 (277 aa).

The 69-residue stretch at Ile-43–Lys-111 folds into the KH type-2 domain. Low complexity predominate over residues Gln-218 to Arg-228. Residues Gln-218–Ala-277 form a disordered region. Over residues Gly-229 to Asp-244 the composition is skewed to basic and acidic residues. Over residues Ala-254–Ala-277 the composition is skewed to low complexity.

Belongs to the universal ribosomal protein uS3 family. As to quaternary structure, part of the 30S ribosomal subunit. Forms a tight complex with proteins S10 and S14.

Functionally, binds the lower part of the 30S subunit head. Binds mRNA in the 70S ribosome, positioning it for translation. The chain is Small ribosomal subunit protein uS3 from Arthrobacter sp. (strain FB24).